The sequence spans 348 residues: Fe(3+) ions import ATP-binding protein FbpC (348 aa).

Residues 7 to 237 (VELRNVTKRF…PASRFMASFM (231 aa)) enclose the ABC transporter domain. 39–46 (GPSGCGKT) lines the ATP pocket.

The protein belongs to the ABC transporter superfamily. Fe(3+) ion importer (TC 3.A.1.10) family. In terms of assembly, the complex is composed of two ATP-binding proteins (FbpC), two transmembrane proteins (FbpB) and a solute-binding protein (FbpA).

It localises to the cell inner membrane. The catalysed reaction is Fe(3+)(out) + ATP + H2O = Fe(3+)(in) + ADP + phosphate + H(+). Functionally, part of the ABC transporter complex FbpABC involved in Fe(3+) ions import. Responsible for energy coupling to the transport system. The sequence is that of Fe(3+) ions import ATP-binding protein FbpC from Escherichia coli O157:H7.